The following is a 543-amino-acid chain: Chaperonin GroEL 1 (543 aa).

ATP is bound by residues 30 to 33, lysine 51, 87 to 91, glycine 415, and aspartate 496; these read TLGP and DGTTT.

Belongs to the chaperonin (HSP60) family. As to quaternary structure, forms a cylinder of 14 subunits composed of two heptameric rings stacked back-to-back. Interacts with the co-chaperonin GroES.

Its subcellular location is the cytoplasm. The catalysed reaction is ATP + H2O + a folded polypeptide = ADP + phosphate + an unfolded polypeptide.. Functionally, together with its co-chaperonin GroES, plays an essential role in assisting protein folding. The GroEL-GroES system forms a nano-cage that allows encapsulation of the non-native substrate proteins and provides a physical environment optimized to promote and accelerate protein folding. The protein is Chaperonin GroEL 1 of Mesorhizobium japonicum (strain LMG 29417 / CECT 9101 / MAFF 303099) (Mesorhizobium loti (strain MAFF 303099)).